The primary structure comprises 455 residues: MSYFGTDGIRGKFGELPITPDFILKLGYVTGLVLIENNQNSPRKPSVVIGKDTRLSGYVIEGALQAGFNAAGVDVYMLGPLPTPAIAHLTRSFNADAGVVISASHNPYYDNGIKFFSADGKKLTDAMQNAINDKLDAIMAVDGNNDAVMPILDPAQLGKNNRIDDAKGRYIEFCKGSFPYQYDLDHLTVVVDCANGAGYSVAPRVMRELGANVIAINNKPDGININADCGSTHPEGLQEAVLKYEADVGIALDGDGDRIVMVDEAGNLVDGDGILYVLATQGQTKVAGVVGTLMSNMGLELALKAADIEFTRAKVGDRYVMQELEANGWILGGEPSGHILCLDKSRTGDAIIASLQILAVMQARGKALSDLTEGFEVLPQKLVNVRLSQMQDPFEHEELVVAFDKARATLEGRGRLLIRQSGTEPMIRVMVESDDEIECDVMANDLADKIKAILG.

Catalysis depends on serine 104, which acts as the Phosphoserine intermediate. Residues serine 104, aspartate 253, aspartate 255, and aspartate 257 each contribute to the Mg(2+) site. Serine 104 carries the phosphoserine modification.

This sequence belongs to the phosphohexose mutase family. Mg(2+) is required as a cofactor. Activated by phosphorylation.

The catalysed reaction is alpha-D-glucosamine 1-phosphate = D-glucosamine 6-phosphate. Catalyzes the conversion of glucosamine-6-phosphate to glucosamine-1-phosphate. The sequence is that of Phosphoglucosamine mutase from Psychrobacter cryohalolentis (strain ATCC BAA-1226 / DSM 17306 / VKM B-2378 / K5).